The primary structure comprises 620 residues: FAD-linked oxidoreductase notD (620 aa).

Residues 1 to 21 (MHYIRELLIVVFTSCPALSYA) form the signal peptide. Residues asparagine 50, asparagine 86, and asparagine 109 are each glycosylated (N-linked (GlcNAc...) asparagine). An FAD-binding PCMH-type domain is found at 124 to 313 (SQGRIPRYSA…TSVTMPVFGA (190 aa)). Residue asparagine 403 is glycosylated (N-linked (GlcNAc...) asparagine).

Belongs to the oxygen-dependent FAD-linked oxidoreductase family. Requires FAD as cofactor.

It participates in alkaloid biosynthesis. In terms of biological role, FAD-linked oxidoreductase; part of the gene cluster that mediates the biosynthesis of notoamide, a fungal indole alkaloid that belongs to a family of natural products containing a characteristic bicyclo[2.2.2]diazaoctane core. The first step of notoamide biosynthesis involves coupling of L-proline and L-tryptophan by the bimodular NRPS notE, to produce cyclo-L-tryptophan-L-proline called brevianamide F. The reverse prenyltransferase notF then acts as a deoxybrevianamide E synthase and converts brevianamide F to deoxybrevianamide E via reverse prenylation at C-2 of the indole ring leading to the bicyclo[2.2.2]diazaoctane core. Deoxybrevianamide E is further hydroxylated at C-6 of the indole ring, likely catalyzed by the cytochrome P450 monooxygenase notG, to yield 6-hydroxy-deoxybrevianamide E. 6-hydroxy-deoxybrevianamide E is a specific substrate of the prenyltransferase notC for normal prenylation at C-7 to produce 6-hydroxy-7-prenyl-deoxybrevianamide, also called notoamide S. As the proposed pivotal branching point in notoamide biosynthesis, notoamide S can be diverted to notoamide E through an oxidative pyran ring closure putatively catalyzed by either notH cytochrome P450 monooxygenase or the notD FAD-linked oxidoreductase. This step would be followed by an indole 2,3-epoxidation-initiated pinacol-like rearrangement catalyzed by the notB FAD-dependent monooxygenase leading to the formation of notoamide C and notoamide D. On the other hand notoamide S is converted to notoamide T by notH (or notD), a bifunctional oxidase that also functions as the intramolecular Diels-Alderase responsible for generation of (+)-notoamide T. To generate antipodal (-)-notoaminide T, notH' (or notD') in Aspergillus versicolor is expected to catalyze a Diels-Alder reaction leading to the opposite stereochemistry. The remaining oxidoreductase notD (or notH) likely catalyzes the oxidative pyran ring formation to yield (+)-stephacidin A. The FAD-dependent monooxygenase notI is highly similar to notB and is predicted to catalyze a similar conversion from (+)-stephacidin A to (-)-notoamide B via the 2,3-epoxidation of (+)-stephacidin A followed by a pinacol-type rearrangement. Finally, it remains unclear which enzyme could be responsible for the final hydroxylation steps leading to notoamide A and sclerotiamide. In Aspergillus sp. (strain MF297-2), this protein is FAD-linked oxidoreductase notD.